Consider the following 515-residue polypeptide: Putative ammonium transporter 2 (515 aa).

The next 12 helical transmembrane spans lie at 34–54 (GVWM…FGLL), 72–92 (VFDV…LTFG), 124–144 (GISY…STIV), 156–176 (SHCF…HWVW), 191–211 (AGCS…TLYL), 226–246 (VSDP…WLAF), 266–286 (AVGT…ITRL), 291–311 (IQMD…TGGC), 321–337 (LVGA…YPVT), 346–366 (VGVF…PAIF), 381–401 (FQTS…LLFL), and 404–424 (FVIL…LFLI).

Belongs to the ammonia transporter channel (TC 1.A.11.2) family.

Its subcellular location is the membrane. Its function is as follows. Involved in the uptake of ammonia. Implicated in aging. The sequence is that of Putative ammonium transporter 2 (amt-2) from Caenorhabditis elegans.